The chain runs to 443 residues: Xaa-Pro dipeptidase (443 aa).

Aspartate 246, aspartate 257, histidine 339, glutamate 384, and glutamate 423 together coordinate Mn(2+).

This sequence belongs to the peptidase M24B family. Bacterial-type prolidase subfamily. Mn(2+) serves as cofactor.

It catalyses the reaction Xaa-L-Pro dipeptide + H2O = an L-alpha-amino acid + L-proline. Its function is as follows. Splits dipeptides with a prolyl residue in the C-terminal position. The polypeptide is Xaa-Pro dipeptidase (Escherichia coli O81 (strain ED1a)).